The primary structure comprises 91 residues: Large ribosomal subunit protein eL37 (91 aa).

Residues Cys-19, Cys-22, Cys-34, and Cys-37 each contribute to the Zn(2+) site. A C4-type zinc finger spans residues Cys-19 to Cys-37.

The protein belongs to the eukaryotic ribosomal protein eL37 family. It depends on Zn(2+) as a cofactor.

In terms of biological role, binds to the 23S rRNA. The sequence is that of Large ribosomal subunit protein eL37 from Caenorhabditis elegans.